We begin with the raw amino-acid sequence, 216 residues long: Somatotropin (216 aa).

The signal sequence occupies residues 1-26 (MAAGPRTSVLLAFTLLCLPWPQEAGA). H45 is a Zn(2+) binding site. Residues C78 and C189 are joined by a disulfide bond. S131 carries the post-translational modification Phosphoserine. Zn(2+) is bound at residue E198. C206 and C214 are oxidised to a cystine.

It belongs to the somatotropin/prolactin family.

The protein localises to the secreted. Functionally, plays an important role in growth control. Its major role in stimulating body growth is to stimulate the liver and other tissues to secrete IGF1. It stimulates both the differentiation and proliferation of myoblasts. It also stimulates amino acid uptake and protein synthesis in muscle and other tissues. The chain is Somatotropin (GH1) from Camelus dromedarius (Dromedary).